Here is a 1149-residue protein sequence, read N- to C-terminus: FH2 domain-containing protein 1 (1149 aa).

4 disordered regions span residues 18–79 (LATA…PPPG), 464–540 (NHDR…SRLS), 554–660 (ESAT…PLLP), and 681–1149 (SPKS…PLQK). 2 stretches are compositionally biased toward pro residues: residues 33 to 48 (ASPPPPPPPPPPPPCP) and 56 to 79 (PSPPPPLPPPLPGGPPIPPPPPPG). Residues 88–483 (GYSSLGKKKR…QLQRQKEMEQ (396 aa)) form the FH2 domain. Over residues 464 to 485 (NHDREEQERKQLQRQKEMEQKR) the composition is skewed to basic and acidic residues. The span at 486–504 (YSWSTGELGSFGRSSSEND) shows a compositional bias: polar residues. Serine 501 is modified (phosphoserine). Low complexity predominate over residues 522-532 (PRPNSPSYRPP). Composition is skewed to polar residues over residues 554–575 (ESATSSPEDPNKFNSLPRSSPR) and 591–604 (SHGPNFTHEPQASK). A phosphoserine mark is found at serine 645 and serine 655. The segment covering 681 to 693 (SPKSLEEGSQLTL) has biased composition (polar residues). Residues 784–795 (MDSRAGGDKQEE) show a composition bias toward basic and acidic residues. Over residues 801–822 (GSVSSGAGEAGSSQVSSNSVSS) the composition is skewed to low complexity. Basic and acidic residues predominate over residues 844–856 (PKDRPSRGKDAIA). The segment covering 926-947 (ETPSSTDTPLSRRSSVRGTSDT) has biased composition (polar residues). The segment at 960–1086 (EEPRLPRSSG…VKGGSEDSAS (127 aa)) is MTBD; microtubule-binding domain. The span at 965–974 (PRSSGSISGR) shows a compositional bias: low complexity. Polar residues-rich tracts occupy residues 1042–1052 (ARNTVASSSRS) and 1064–1074 (TGLTRTVSQRQ). The span at 1123-1134 (GTTERSSLRLKD) shows a compositional bias: basic and acidic residues.

As to quaternary structure, interacts with CEP170. As to expression, brain, heart and lung (at protein level).

It is found in the golgi apparatus. The protein localises to the cell projection. It localises to the cilium. Functionally, microtubule-associated formin which regulates both actin and microtubule dynamics. Induces microtubule acetylation and stabilization and actin stress fiber formation. Regulates Golgi ribbon formation. Required for normal cilia assembly. Early in cilia assembly, may assist in the maturation and positioning of the centrosome/basal body, and once cilia assembly has initiated, may also promote cilia elongation by inhibiting disassembly. The sequence is that of FH2 domain-containing protein 1 (Fhdc1) from Mus musculus (Mouse).